The sequence spans 193 residues: Gas vesicle protein C (193 aa).

5 repeats span residues 19 to 51 (VAEL…LQAF), 52 to 84 (YKDL…LLAF), 85 to 117 (HKEL…LLAF), 118 to 150 (YQEV…LLAF), and 151 to 183 (HKEL…LLKF). Residues 19–183 (VAELSLETRE…KEQKESLLKF (165 aa)) are 5 X 33 AA tandem repeats.

The protein belongs to the gas vesicle GvpC family.

Its subcellular location is the gas vesicle. In terms of biological role, confers stability, involved in shaping gas vesicles (GV), hollow, gas-filled proteinaceous nanostructures. During planktonic growth they allow positioning of the organism at a favorable depth for light or nutrient acquisition. The ratio of GvpA:GvpC is estimated to be 25:1. GvpC strengthens the GV wall, probably by connecting several GvpA proteins in the same and/or adjacent ribs. Removal of GvpC by SDS reduces the critical collapse pressure (CCP) of stored gas vesicles from 0.23 Mpa to 0.08 MPa. Removal of GvpC by urea reduces CCP of freshly isolated GVs from 0.550 MPa to 0.190 MPa; addition of recombinant GvpC restores CCP to 0.508 MPa. As the turgor pressure in this species is usually 0.35 MPa (plus the water column pressure in its growth environment), this protein is essential for GV formation. The sequence is that of Gas vesicle protein C from Dolichospermum flosaquae (Anabaena flos-aquae).